The following is a 428-amino-acid chain: Putative UPF0496 protein 5 (428 aa).

Basic residues predominate over residues 1-14 (MGNRHGIMRPRRLA). The tract at residues 1–40 (MGNRHGIMRPRRLASGRSAAAAEEEGEDGEGEPGSYEAAC) is disordered. Acidic residues predominate over residues 22–31 (AEEEGEDGEG). Helical transmembrane passes span 229–249 (IVFL…AAIA) and 252–272 (PVAA…GKWM).

Belongs to the UPF0496 family.

The protein resides in the membrane. The sequence is that of Putative UPF0496 protein 5 from Oryza sativa subsp. indica (Rice).